The sequence spans 343 residues: Mating-type protein MAT-2 (343 aa).

2 disordered regions span residues 98-117 (RSPQVVSSPQSAQTSPSEQT) and 177-223 (KKPW…AAMT). Residues 99-117 (SPQVVSSPQSAQTSPSEQT) show a composition bias toward low complexity. Residues 131–199 (APRPMNCWII…EHLRQHPNYK (69 aa)) constitute a DNA-binding region (HMG box). A compositionally biased stretch (basic residues) spans 206 to 218 (GEKKKRQSRKSKR).

The protein localises to the nucleus. The polypeptide is Mating-type protein MAT-2 (MAT2) (Cochliobolus heterostrophus (Southern corn leaf blight fungus)).